The primary structure comprises 57 residues: Large ribosomal subunit protein eL20 (57 aa).

It belongs to the eukaryotic ribosomal protein eL20 family. Part of the 50S ribosomal subunit. Binds 23S rRNA.

In Archaeoglobus fulgidus (strain ATCC 49558 / DSM 4304 / JCM 9628 / NBRC 100126 / VC-16), this protein is Large ribosomal subunit protein eL20.